The chain runs to 82 residues: Turripeptide Gdm9.1 (82 aa).

The first 23 residues, 1-23 (MMAKLMITVMMVLLLSLQQGADG), serve as a signal peptide directing secretion. Residues 24 to 46 (RSERWRKNQMAASRIMRNLITAR) constitute a propeptide that is removed on maturation. Pro-49 and Pro-50 each carry 4-hydroxyproline. Cystine bridges form between Cys-53/Cys-68, Cys-58/Cys-72, and Cys-64/Cys-79. A 4-carboxyglutamate mark is found at Glu-60 and Glu-63.

It belongs to the Pg turripeptide superfamily. Expressed by the venom duct.

The protein resides in the secreted. The chain is Turripeptide Gdm9.1 from Gemmula diomedea (Gem-turris).